A 393-amino-acid polypeptide reads, in one-letter code: MSMLETRAERMVINLGPHHPSMHGVLRLIVTLDGENVVDCVPVLGYLHRSMEKIAESRTIIQYLPYVTRWDYLATMFTEAITVNAPEQLAGVQVPRRARYIRVIMLELSRIASHLLWLGPFMADIGATSPFFYIFREREMIYDLFEAATGMRMMHNYFRVGGVAVDLPYGWVDKARDFCNYLPPKIDEYERLITNNPIFRGRVEGLGYIGREDAINWGLSGPMLRASGVNWDLRKVDHYEIYDELDWNVAWDTGGDTLARYVVRIQEMRESVKMIRQALDQLPGGPYENLEAQRLSGGPKSEWNGFDYQFIGKKSSPTFKMPRGEHYVRVEAPKGELGVYLIGDDSTFPWRWKIRPPGFINLAVLPKLVQGTKLADLMAILGSVDIIMGEVDR.

Belongs to the complex I 49 kDa subunit family. In terms of assembly, NDH-1 can be composed of about 15 different subunits; different subcomplexes with different compositions have been identified which probably have different functions.

It localises to the cell inner membrane. It carries out the reaction a plastoquinone + NADH + (n+1) H(+)(in) = a plastoquinol + NAD(+) + n H(+)(out). It catalyses the reaction a plastoquinone + NADPH + (n+1) H(+)(in) = a plastoquinol + NADP(+) + n H(+)(out). NDH-1 shuttles electrons from an unknown electron donor, via FMN and iron-sulfur (Fe-S) centers, to quinones in the respiratory and/or the photosynthetic chain. The immediate electron acceptor for the enzyme in this species is believed to be plastoquinone. Couples the redox reaction to proton translocation, and thus conserves the redox energy in a proton gradient. Cyanobacterial NDH-1 also plays a role in inorganic carbon-concentration. The sequence is that of NAD(P)H-quinone oxidoreductase subunit H 1 from Gloeobacter violaceus (strain ATCC 29082 / PCC 7421).